The following is a 238-amino-acid chain: Ribonuclease PH (238 aa).

Phosphate contacts are provided by residues arginine 86 and glycine 124–arginine 126.

The protein belongs to the RNase PH family. Homohexameric ring arranged as a trimer of dimers.

It carries out the reaction tRNA(n+1) + phosphate = tRNA(n) + a ribonucleoside 5'-diphosphate. In terms of biological role, phosphorolytic 3'-5' exoribonuclease that plays an important role in tRNA 3'-end maturation. Removes nucleotide residues following the 3'-CCA terminus of tRNAs; can also add nucleotides to the ends of RNA molecules by using nucleoside diphosphates as substrates, but this may not be physiologically important. Probably plays a role in initiation of 16S rRNA degradation (leading to ribosome degradation) during starvation. The protein is Ribonuclease PH of Edwardsiella ictaluri (strain 93-146).